The following is a 127-amino-acid chain: MTLTYPEDLQYLDSHEYLRLEGDTATLGISAFAVDQLGDIVFVELPAVGDALEPGERFGTIESVKAVEDLYAPLGGTVIAVNQAVIDNPEQIAADPYGEGWLVKVQVSTLPTGLLSAADYRALVEGS.

A Lipoyl-binding domain is found at 24-106; sequence TATLGISAFA…YGEGWLVKVQ (83 aa). An N6-lipoyllysine modification is found at K65.

It belongs to the GcvH family. As to quaternary structure, the glycine cleavage system is composed of four proteins: P, T, L and H. Requires (R)-lipoate as cofactor.

Its function is as follows. The glycine cleavage system catalyzes the degradation of glycine. The H protein shuttles the methylamine group of glycine from the P protein to the T protein. This is Glycine cleavage system H protein from Thermosynechococcus vestitus (strain NIES-2133 / IAM M-273 / BP-1).